The following is a 208-amino-acid chain: Small ribosomal subunit protein eS8 (208 aa).

The disordered stretch occupies residues 1–33; that stretch reads MGISRDHWHKRRATGGKRKPIRKKRKFELGRPA. Positions 7–26 are enriched in basic residues; that stretch reads HWHKRRATGGKRKPIRKKRK.

Belongs to the eukaryotic ribosomal protein eS8 family.

In Apis mellifera (Honeybee), this protein is Small ribosomal subunit protein eS8 (RpS8).